Here is a 488-residue protein sequence, read N- to C-terminus: Multidrug resistance outer membrane protein MdtP (488 aa).

An N-terminal signal peptide occupies residues 1-23; the sequence is MINRQLSRLLLCSILGSTTLISG. A lipid anchor (N-palmitoyl cysteine) is attached at C24. A lipid anchor (S-diacylglycerol cysteine) is attached at C24.

The protein belongs to the outer membrane factor (OMF) (TC 1.B.17) family. Could be part of a tripartite efflux system composed of MdtN, MdtO and MdtP.

The protein localises to the cell outer membrane. In terms of biological role, could be involved in resistance to puromycin, acriflavine and tetraphenylarsonium chloride. This chain is Multidrug resistance outer membrane protein MdtP (mdtP), found in Shigella flexneri.